The sequence spans 154 residues: Probable transcription factor At4g00232 (154 aa).

Positions 1-44 (MDKANTNRSKVCGGSGEAKLTGKKRKNVSAKQSKKDAKKENSQM) are disordered.

The protein belongs to the GeBP family.

This Arabidopsis thaliana (Mouse-ear cress) protein is Probable transcription factor At4g00232.